We begin with the raw amino-acid sequence, 218 residues long: Probable nicotinate-nucleotide adenylyltransferase (218 aa).

Belongs to the NadD family.

It catalyses the reaction nicotinate beta-D-ribonucleotide + ATP + H(+) = deamido-NAD(+) + diphosphate. The protein operates within cofactor biosynthesis; NAD(+) biosynthesis; deamido-NAD(+) from nicotinate D-ribonucleotide: step 1/1. Functionally, catalyzes the reversible adenylation of nicotinate mononucleotide (NaMN) to nicotinic acid adenine dinucleotide (NaAD). In Halorhodospira halophila (strain DSM 244 / SL1) (Ectothiorhodospira halophila (strain DSM 244 / SL1)), this protein is Probable nicotinate-nucleotide adenylyltransferase.